Consider the following 194-residue polypeptide: Peptidyl-tRNA hydrolase (194 aa).

Tyr-17 serves as a coordination point for tRNA. Residue His-22 is the Proton acceptor of the active site. TRNA is bound by residues Tyr-68, Asn-70, and Asn-115.

The protein belongs to the PTH family. Monomer.

Its subcellular location is the cytoplasm. It carries out the reaction an N-acyl-L-alpha-aminoacyl-tRNA + H2O = an N-acyl-L-amino acid + a tRNA + H(+). Functionally, hydrolyzes ribosome-free peptidyl-tRNAs (with 1 or more amino acids incorporated), which drop off the ribosome during protein synthesis, or as a result of ribosome stalling. Catalyzes the release of premature peptidyl moieties from peptidyl-tRNA molecules trapped in stalled 50S ribosomal subunits, and thus maintains levels of free tRNAs and 50S ribosomes. This Pseudoalteromonas atlantica (strain T6c / ATCC BAA-1087) protein is Peptidyl-tRNA hydrolase.